Here is a 274-residue protein sequence, read N- to C-terminus: Undecaprenyl-diphosphatase 1 (274 aa).

7 helical membrane passes run 8-28 (WLLIKYLLLGLFQGFTEPIPV), 45-65 (IEGLSFEVMVNFASLFAVIAI), 92-112 (FRISFYLLLATVPAVLAALLF), 120-140 (LKQLHVIAFALLITGMALWLI), 195-215 (FSFFLYIPISLGSGVLAISDI), 230-250 (IAFIGSFIASYVSLLWFMNIM), and 253-273 (GKLIYFALYCWLAGLIVLSLL).

It belongs to the UppP family.

The protein resides in the cell membrane. It carries out the reaction di-trans,octa-cis-undecaprenyl diphosphate + H2O = di-trans,octa-cis-undecaprenyl phosphate + phosphate + H(+). In terms of biological role, catalyzes the dephosphorylation of undecaprenyl diphosphate (UPP). Confers resistance to bacitracin. The sequence is that of Undecaprenyl-diphosphatase 1 from Halalkalibacterium halodurans (strain ATCC BAA-125 / DSM 18197 / FERM 7344 / JCM 9153 / C-125) (Bacillus halodurans).